The primary structure comprises 531 residues: Calcium-dependent protein kinase 21 (531 aa).

Residues 1-10 (MGCFSSKHRK) are compositionally biased toward basic residues. The segment at 1-62 (MGCFSSKHRK…STPSSNPVSV (62 aa)) is disordered. Gly2 carries N-myristoyl glycine lipidation. Positions 48-60 (IHQQISTPSSNPV) are enriched in polar residues. One can recognise a Protein kinase domain in the interval 80–338 (YSLGKELGRG…AAQVLEHPWI (259 aa)). Residues 86 to 94 (LGRGQFGIT) and Lys109 contribute to the ATP site. Asp204 acts as the Proton acceptor in catalysis. Ser244 carries the post-translational modification Phosphoserine. The interval 343–373 (APDKPIDSAVLSRMKQFRAMNKLKKLALKVI) is autoinhibitory domain. EF-hand domains are found at residues 380 to 415 (EEIKGLKTMFANIDTDKSGTITYEELKTGLTRLGSR), 416 to 451 (LSETEVKQLMEAADVDGNGTIDYYEFISATMHRYKL), 452 to 487 (DRDEHVYKAFQHFDKDNSGHITRDELESAMKEYGMG), and 488 to 522 (DEASIKEVISEVDTDNDGRINFEEFCAMMRSGSTQ). Ca(2+)-binding residues include Asp393, Asp395, Ser397, Thr399, Glu404, Asp429, Asp431, Asn433, Thr435, Glu440, Asp465, Asp467, Ser469, His471, Glu476, Asp500, Asp502, Asp504, Arg506, and Glu511.

It belongs to the protein kinase superfamily. Ser/Thr protein kinase family. CDPK subfamily. As to quaternary structure, interacts with SLAC1 and ABI1.

Its subcellular location is the cell membrane. It catalyses the reaction L-seryl-[protein] + ATP = O-phospho-L-seryl-[protein] + ADP + H(+). It carries out the reaction L-threonyl-[protein] + ATP = O-phospho-L-threonyl-[protein] + ADP + H(+). With respect to regulation, activated by calcium. Autophosphorylation may play an important role in the regulation of the kinase activity. Functionally, may play a role in signal transduction pathways that involve calcium as a second messenger. Mediates the phosphorylation and activation of the S-type anion efflux channel SLAC1. The sequence is that of Calcium-dependent protein kinase 21 (CPK21) from Arabidopsis thaliana (Mouse-ear cress).